A 101-amino-acid polypeptide reads, in one-letter code: Small ribosomal subunit protein bS18c (101 aa).

Belongs to the bacterial ribosomal protein bS18 family. Part of the 30S ribosomal subunit.

It localises to the plastid. Its subcellular location is the chloroplast. The chain is Small ribosomal subunit protein bS18c from Panax ginseng (Korean ginseng).